A 244-amino-acid polypeptide reads, in one-letter code: MSKLDLNALNDLPKVDRVLALAEPNAQLETLTAEERVAWALENLPGEYVLSSSFGIQAAVSLHLVNQIRPDIPVILTDTGYLFPETYQFIDELTDKLKLNLKVYRAGESPAWQEARYGKLWEQGVEGIEKYNEINKVEPMNRALKELKAQTWFAGLRREQSGSRAHLPVLAIQRGVFKVLPIIDWDNRTVYQYLQKHGLKYHPLWDQGYLSVGDTHTTRKWEPGMAEEETRFFGLKRECGLHEG.

C239 serves as the catalytic Nucleophile; cysteine thiosulfonate intermediate.

It belongs to the PAPS reductase family. CysH subfamily.

It is found in the cytoplasm. The enzyme catalyses [thioredoxin]-disulfide + sulfite + adenosine 3',5'-bisphosphate + 2 H(+) = [thioredoxin]-dithiol + 3'-phosphoadenylyl sulfate. It functions in the pathway sulfur metabolism; hydrogen sulfide biosynthesis; sulfite from sulfate: step 3/3. Its function is as follows. Catalyzes the formation of sulfite from phosphoadenosine 5'-phosphosulfate (PAPS) using thioredoxin as an electron donor. The sequence is that of Phosphoadenosine 5'-phosphosulfate reductase from Salmonella agona (strain SL483).